The primary structure comprises 190 residues: ATP synthase subunit b 1 (190 aa).

Residues 35 to 55 (DFVVLLGFLLFLAILFYFGVP) traverse the membrane as a helical segment.

Belongs to the ATPase B chain family. As to quaternary structure, F-type ATPases have 2 components, F(1) - the catalytic core - and F(0) - the membrane proton channel. F(1) has five subunits: alpha(3), beta(3), gamma(1), delta(1), epsilon(1). F(0) has three main subunits: a(1), b(2) and c(10-14). The alpha and beta chains form an alternating ring which encloses part of the gamma chain. F(1) is attached to F(0) by a central stalk formed by the gamma and epsilon chains, while a peripheral stalk is formed by the delta and b chains.

The protein localises to the cell inner membrane. In terms of biological role, f(1)F(0) ATP synthase produces ATP from ADP in the presence of a proton or sodium gradient. F-type ATPases consist of two structural domains, F(1) containing the extramembraneous catalytic core and F(0) containing the membrane proton channel, linked together by a central stalk and a peripheral stalk. During catalysis, ATP synthesis in the catalytic domain of F(1) is coupled via a rotary mechanism of the central stalk subunits to proton translocation. Functionally, component of the F(0) channel, it forms part of the peripheral stalk, linking F(1) to F(0). The sequence is that of ATP synthase subunit b 1 from Jannaschia sp. (strain CCS1).